Reading from the N-terminus, the 399-residue chain is Cytohesin-3 (399 aa).

Positions 14 to 61 form a coiled coil; it reads EDLSLEEREELLDIRRRKKELIDDIERLKYEIAEVMTEIDNLTSVEES. Residues 77–206 form the SEC7 domain; it reads FNMDPKKGIQ…IIMLNTSLHN (130 aa). Residues 264–380 enclose the PH domain; the sequence is NPDREGWLLK…WMKSIKASIS (117 aa). A 1,2-diacyl-sn-glycero-3-phospho-(1D-myo-inositol-3,4,5-trisphosphate)-binding positions include 273–280, arginine 284, tyrosine 295, arginine 305, and asparagine 354; that span reads KLGGRVKT. The segment at 391-399 is C-terminal autoinhibitory region; sequence RKRRIANKK.

Interacts with TAMALIN. Interacts with FRMD4A. Interacts with FRMD4B.

The protein localises to the cytoplasm. The protein resides in the cytosol. It is found in the cell membrane. Its subcellular location is the cell junction. It localises to the adherens junction. The protein localises to the tight junction. Its function is as follows. Promotes guanine-nucleotide exchange on ARF1. Promotes the activation of ARF factors through replacement of GDP with GTP. Plays a role in the epithelial polarization. This chain is Cytohesin-3 (Cyth3), found in Mus musculus (Mouse).